We begin with the raw amino-acid sequence, 285 residues long: Diphthine methyl ester synthase (285 aa).

S-adenosyl-L-methionine contacts are provided by residues Leu-9, Asp-84, Gly-87, 112–113 (SI), Leu-163, Val-221, and His-246.

It belongs to the diphthine synthase family.

It is found in the cytoplasm. It carries out the reaction 2-[(3S)-amino-3-carboxypropyl]-L-histidyl-[translation elongation factor 2] + 4 S-adenosyl-L-methionine = diphthine methyl ester-[translation elongation factor 2] + 4 S-adenosyl-L-homocysteine + 3 H(+). The protein operates within protein modification; peptidyl-diphthamide biosynthesis. In terms of biological role, S-adenosyl-L-methionine-dependent methyltransferase that catalyzes four methylations of the modified target histidine residue in translation elongation factor 2 (EF-2), to form an intermediate called diphthine methyl ester. The four successive methylation reactions represent the second step of diphthamide biosynthesis. This chain is Diphthine methyl ester synthase (dph5), found in Aspergillus fumigatus (strain ATCC MYA-4609 / CBS 101355 / FGSC A1100 / Af293) (Neosartorya fumigata).